The following is a 501-amino-acid chain: Cytochrome P450 7A1 (501 aa).

A helical transmembrane segment spans residues 4-24 (IFWIWGICLSVCCCLWLILGL). C441 contributes to the heme binding site.

This sequence belongs to the cytochrome P450 family. Requires heme as cofactor. As to expression, detected in liver.

The protein localises to the endoplasmic reticulum membrane. It is found in the microsome membrane. The enzyme catalyses cholesterol + reduced [NADPH--hemoprotein reductase] + O2 = 7alpha-hydroxycholesterol + oxidized [NADPH--hemoprotein reductase] + H2O + H(+). It carries out the reaction 4beta-hydroxycholesterol + reduced [NADPH--hemoprotein reductase] + O2 = 4beta,7alpha-dihydroxycholesterol + oxidized [NADPH--hemoprotein reductase] + H2O + H(+). The catalysed reaction is lathosterol + reduced [NADPH--hemoprotein reductase] + O2 = 7alpha,8alpha-epoxy-5alpha-cholestan-3beta-ol + oxidized [NADPH--hemoprotein reductase] + H2O + H(+). It catalyses the reaction lathosterol + reduced [NADPH--hemoprotein reductase] + O2 = 5alpha-cholestan-7-oxo-3beta-ol + oxidized [NADPH--hemoprotein reductase] + H2O + H(+). The enzyme catalyses 7-dehydrocholesterol + reduced [NADPH--hemoprotein reductase] + O2 = 7-oxocholesterol + oxidized [NADPH--hemoprotein reductase] + H2O + H(+). It carries out the reaction (24S)-hydroxycholesterol + reduced [NADPH--hemoprotein reductase] + O2 = (24S)-7alpha-dihydroxycholesterol + oxidized [NADPH--hemoprotein reductase] + H2O + H(+). The catalysed reaction is (24R)-hydroxycholesterol + reduced [NADPH--hemoprotein reductase] + O2 = (24R)-7alpha-dihydroxycholesterol + oxidized [NADPH--hemoprotein reductase] + H2O + H(+). It participates in lipid metabolism; bile acid biosynthesis. Its pathway is steroid metabolism; cholesterol degradation. In terms of biological role, a cytochrome P450 monooxygenase involved in the metabolism of endogenous cholesterol and its oxygenated derivatives (oxysterols). Mechanistically, uses molecular oxygen inserting one oxygen atom into a substrate, and reducing the second into a water molecule, with two electrons provided by NADPH via cytochrome P450 reductase (CPR; NADPH-ferrihemoprotein reductase). Functions as a critical regulatory enzyme of bile acid biosynthesis and cholesterol homeostasis. Catalyzes the hydroxylation of carbon hydrogen bond at 7-alpha position of cholesterol, a rate-limiting step in cholesterol catabolism and bile acid biosynthesis. 7-alpha hydroxylates several oxysterols, including 4beta-hydroxycholesterol and 24-hydroxycholesterol. Catalyzes the oxidation of the 7,8 double bond of 7-dehydrocholesterol and lathosterol with direct and predominant formation of the 7-keto derivatives. The sequence is that of Cytochrome P450 7A1 (CYP7A1) from Oryctolagus cuniculus (Rabbit).